The sequence spans 496 residues: Guanosine-5'-triphosphate,3'-diphosphate pyrophosphatase (496 aa).

This sequence belongs to the GppA/Ppx family. GppA subfamily.

The catalysed reaction is guanosine 3'-diphosphate 5'-triphosphate + H2O = guanosine 3',5'-bis(diphosphate) + phosphate + H(+). It participates in purine metabolism; ppGpp biosynthesis; ppGpp from GTP: step 2/2. In terms of biological role, catalyzes the conversion of pppGpp to ppGpp. Guanosine pentaphosphate (pppGpp) is a cytoplasmic signaling molecule which together with ppGpp controls the 'stringent response', an adaptive process that allows bacteria to respond to amino acid starvation, resulting in the coordinated regulation of numerous cellular activities. In Aeromonas hydrophila subsp. hydrophila (strain ATCC 7966 / DSM 30187 / BCRC 13018 / CCUG 14551 / JCM 1027 / KCTC 2358 / NCIMB 9240 / NCTC 8049), this protein is Guanosine-5'-triphosphate,3'-diphosphate pyrophosphatase.